Here is a 120-residue protein sequence, read N- to C-terminus: Large ribosomal subunit protein uL18 (120 aa).

It belongs to the universal ribosomal protein uL18 family. Part of the 50S ribosomal subunit; part of the 5S rRNA/L5/L18/L25 subcomplex. Contacts the 5S and 23S rRNAs.

Its function is as follows. This is one of the proteins that bind and probably mediate the attachment of the 5S RNA into the large ribosomal subunit, where it forms part of the central protuberance. The protein is Large ribosomal subunit protein uL18 of Geobacillus thermodenitrificans (strain NG80-2).